A 212-amino-acid chain; its full sequence is Prolactin (212 aa).

A signal peptide spans 1–24 (MAHRETNGSKLFITVLCMVAACSA). 2 disulfide bridges follow: Cys-70-Cys-185 and Cys-202-Cys-212.

It belongs to the somatotropin/prolactin family.

The protein resides in the secreted. This is Prolactin (prl) from Sparus aurata (Gilthead sea bream).